The primary structure comprises 343 residues: L-ornithine/L-arginine 3-hydroxylase (343 aa).

Fe cation contacts are provided by His-147 and Glu-149. The span at 199 to 215 shows a compositional bias: polar residues; that stretch reads MPDNSHLPQNTAESTGD. Positions 199 to 218 are disordered; sequence MPDNSHLPQNTAESTGDPTK. Position 302 (His-302) interacts with Fe cation. Arg-316 serves as a coordination point for 2-oxoglutarate.

The protein belongs to the clavaminate synthase family. Fe(2+) serves as cofactor.

It carries out the reaction L-ornithine + 2-oxoglutarate + O2 = (3S)-3-hydroxy-L-ornithine + succinate + CO2. The catalysed reaction is L-arginine + 2-oxoglutarate + O2 = (2S,3S)-hydroxyarginine + succinate + CO2. Its function is as follows. Alpha-ketoglutarate-dependent dioxygenase that in vitro catalyzes the regio- and stereoselective hydroxylation of L-ornithine and L-arginine, leading to (3S)-3-hydroxy-L-ornithine and (3S)-3-hydroxy-L-arginine, respectively. Cannot use L-lysine, D-ornithine, or D-arginine as substrate. The protein is L-ornithine/L-arginine 3-hydroxylase of Catenulispora acidiphila (strain DSM 44928 / JCM 14897 / NBRC 102108 / NRRL B-24433 / ID139908).